The chain runs to 396 residues: Metallophosphoesterase 1 (396 aa).

The helical transmembrane segment at 27–47 (IAVVFAVLLFCEFLIYYLAIF) threads the bilayer. Positions 77, 119, 157, 249, 303, and 305 each coordinate a divalent metal cation. Residues 356–376 (VVLVIYCGAVGFLVVLTLSHL) form a helical membrane-spanning segment. Positions 392–396 (KRKTR) match the Di-lysine motif motif.

It belongs to the metallophosphoesterase superfamily. MPPE1 family. As to quaternary structure, interacts with GPI-anchor proteins (via the GPI portion). Interacts with TMED10. Requires Mn(2+) as cofactor.

Its subcellular location is the endoplasmic reticulum-Golgi intermediate compartment membrane. Functionally, metallophosphoesterase that catalyzes the removal of a side-chain ethanolamine-phosphate (EtNP) from the second mannose of the GPI-anchor protein intermediate. Participates in the glycan remodeling steps of GPI-anchor maturation to allow an efficient transport of GPI-anchor proteins from the endoplasmic reticulum to the Golgi. The polypeptide is Metallophosphoesterase 1 (Macaca fascicularis (Crab-eating macaque)).